The following is a 337-amino-acid chain: Arylacetonitrilase (337 aa).

The CN hydrolase domain occupies 7–278; sequence VRVAVTQHEP…EGFVYADLDL (272 aa). E47 acts as the Proton acceptor in catalysis. K127 is a catalytic residue. The active-site Nucleophile is C162. The segment at 311–337 is disordered; the sequence is QHRPEGQADNAAYGLDVPSGLVEEEGA.

This sequence belongs to the carbon-nitrogen hydrolase superfamily. Nitrilase family.

It carries out the reaction a nitrile + 2 H2O = a carboxylate + NH4(+). It catalyses the reaction 4-chlorophenylacetonitrile + 2 H2O = 4-chlorophenylacetate + NH4(+). Its function is as follows. Nitrilase that hydrolyzes preferentially phenylacetonitrile, but also (R,S)-mandelonitrile, and 2-phenylpropionitrile. This is Arylacetonitrilase from Aspergillus niger (strain ATCC MYA-4892 / CBS 513.88 / FGSC A1513).